A 443-amino-acid polypeptide reads, in one-letter code: Probable 26S proteasome regulatory subunit 4 (443 aa).

The interval 1–53 (MGQQQSGFGGRGNDRGAGDGEKKEKKKYEAPIPSRIGKKKKGSKGPDAASKLP) is disordered. Positions 12 to 29 (GNDRGAGDGEKKEKKKYE) are enriched in basic and acidic residues. An ATP-binding site is contributed by 229–236 (GCPGTGKT).

It belongs to the AAA ATPase family.

It is found in the cytoplasm. It localises to the nucleus. In terms of biological role, the 26S proteasome is involved in the ATP-dependent degradation of ubiquitinated proteins. The regulatory (or ATPase) complex confers ATP dependency and substrate specificity to the 26S complex. May play a role in the degradation of microtubule severing protein mei-1. The protein is Probable 26S proteasome regulatory subunit 4 (rpt-2) of Caenorhabditis elegans.